The sequence spans 334 residues: Porphobilinogen deaminase (334 aa).

S-(dipyrrolylmethanemethyl)cysteine is present on cysteine 255.

The protein belongs to the HMBS family. As to quaternary structure, monomer. The cofactor is dipyrromethane.

The catalysed reaction is 4 porphobilinogen + H2O = hydroxymethylbilane + 4 NH4(+). It participates in porphyrin-containing compound metabolism; protoporphyrin-IX biosynthesis; coproporphyrinogen-III from 5-aminolevulinate: step 2/4. In terms of biological role, tetrapolymerization of the monopyrrole PBG into the hydroxymethylbilane pre-uroporphyrinogen in several discrete steps. This is Porphobilinogen deaminase from Burkholderia orbicola (strain MC0-3).